A 394-amino-acid chain; its full sequence is Phosphoglycerate kinase (394 aa).

Substrate-binding positions include 21 to 23, R36, 59 to 62, R118, and R151; these read DFN and HLGR. S183 carries the phosphoserine modification. Positions 201 and 292 each coordinate ATP. Position 299 is a phosphothreonine (T299). Residues E323 and 350-353 contribute to the ATP site; that span reads GGDS.

This sequence belongs to the phosphoglycerate kinase family. As to quaternary structure, monomer.

It is found in the cytoplasm. It carries out the reaction (2R)-3-phosphoglycerate + ATP = (2R)-3-phospho-glyceroyl phosphate + ADP. It functions in the pathway carbohydrate degradation; glycolysis; pyruvate from D-glyceraldehyde 3-phosphate: step 2/5. The protein is Phosphoglycerate kinase of Anoxybacillus flavithermus (strain DSM 21510 / WK1).